A 157-amino-acid chain; its full sequence is Ribosome maturation factor RimP (157 aa).

This sequence belongs to the RimP family.

The protein localises to the cytoplasm. Required for maturation of 30S ribosomal subunits. This is Ribosome maturation factor RimP from Streptococcus thermophilus (strain ATCC BAA-491 / LMD-9).